Reading from the N-terminus, the 373-residue chain is Dual-specificity RNA methyltransferase RlmN (373 aa).

The active-site Proton acceptor is the Glu104. The 240-residue stretch at 110–349 folds into the Radical SAM core domain; that stretch reads KNQRTTLCIS…VTIRKIRGYD (240 aa). Cys117 and Cys354 are oxidised to a cystine. [4Fe-4S] cluster is bound by residues Cys124, Cys128, and Cys131. Residues 178–179, Ser210, 232–234, and Asn311 contribute to the S-adenosyl-L-methionine site; these read GE and SLH. The active-site S-methylcysteine intermediate is the Cys354.

This sequence belongs to the radical SAM superfamily. RlmN family. It depends on [4Fe-4S] cluster as a cofactor.

Its subcellular location is the cytoplasm. The catalysed reaction is adenosine(2503) in 23S rRNA + 2 reduced [2Fe-2S]-[ferredoxin] + 2 S-adenosyl-L-methionine = 2-methyladenosine(2503) in 23S rRNA + 5'-deoxyadenosine + L-methionine + 2 oxidized [2Fe-2S]-[ferredoxin] + S-adenosyl-L-homocysteine. The enzyme catalyses adenosine(37) in tRNA + 2 reduced [2Fe-2S]-[ferredoxin] + 2 S-adenosyl-L-methionine = 2-methyladenosine(37) in tRNA + 5'-deoxyadenosine + L-methionine + 2 oxidized [2Fe-2S]-[ferredoxin] + S-adenosyl-L-homocysteine. Specifically methylates position 2 of adenine 2503 in 23S rRNA and position 2 of adenine 37 in tRNAs. m2A2503 modification seems to play a crucial role in the proofreading step occurring at the peptidyl transferase center and thus would serve to optimize ribosomal fidelity. The protein is Dual-specificity RNA methyltransferase RlmN of Buchnera aphidicola subsp. Baizongia pistaciae (strain Bp).